The sequence spans 238 residues: Response regulator receiver protein Anae109_2439 (238 aa).

Response regulatory domains lie at 3–117 and 121–228; these read RYLI…AAAR and LVAV…ERLH. 4-aspartylphosphate occurs at positions 52 and 169.

In terms of processing, is diphosphorylated by GchK.

Functionally, member of the two-component regulatory system GcHK/Anae109_2439. Is involved in a signal transduction system responding to oxygen availability. This chain is Response regulator receiver protein Anae109_2439, found in Anaeromyxobacter sp. (strain Fw109-5).